Reading from the N-terminus, the 160-residue chain is NAD(P)H-quinone oxidoreductase subunit I, chloroplastic (160 aa).

2 4Fe-4S ferredoxin-type domains span residues 55–84 (GRIH…VDWK) and 95–124 (LNYS…MTEE). Cys64, Cys67, Cys70, Cys74, Cys104, Cys107, Cys110, and Cys114 together coordinate [4Fe-4S] cluster.

It belongs to the complex I 23 kDa subunit family. As to quaternary structure, NDH is composed of at least 16 different subunits, 5 of which are encoded in the nucleus. [4Fe-4S] cluster is required as a cofactor.

It localises to the plastid. It is found in the chloroplast thylakoid membrane. The enzyme catalyses a plastoquinone + NADH + (n+1) H(+)(in) = a plastoquinol + NAD(+) + n H(+)(out). It carries out the reaction a plastoquinone + NADPH + (n+1) H(+)(in) = a plastoquinol + NADP(+) + n H(+)(out). Its function is as follows. NDH shuttles electrons from NAD(P)H:plastoquinone, via FMN and iron-sulfur (Fe-S) centers, to quinones in the photosynthetic chain and possibly in a chloroplast respiratory chain. The immediate electron acceptor for the enzyme in this species is believed to be plastoquinone. Couples the redox reaction to proton translocation, and thus conserves the redox energy in a proton gradient. The sequence is that of NAD(P)H-quinone oxidoreductase subunit I, chloroplastic from Cucumis sativus (Cucumber).